Reading from the N-terminus, the 98-residue chain is Integration host factor subunit alpha (98 aa).

The segment covering 53 to 69 has biased composition (basic and acidic residues); sequence DLREKSERPGRNPKTGE. The segment at 53–73 is disordered; sequence DLREKSERPGRNPKTGEDIPI.

Belongs to the bacterial histone-like protein family. Heterodimer of an alpha and a beta chain.

This protein is one of the two subunits of integration host factor, a specific DNA-binding protein that functions in genetic recombination as well as in transcriptional and translational control. The sequence is that of Integration host factor subunit alpha from Aliivibrio salmonicida (strain LFI1238) (Vibrio salmonicida (strain LFI1238)).